The sequence spans 354 residues: Guanine nucleotide-binding protein G(i) subunit alpha-3 (354 aa).

The N-myristoyl glycine moiety is linked to residue Gly2. Cys3 carries the S-palmitoyl cysteine lipid modification. A G-alpha domain is found at 32 to 354 (KEVKLLLLGA…KNNLKECGLY (323 aa)). Residues 35–48 (KLLLLGAGESGKST) form a G1 motif region. GTP-binding residues include Gly42, Glu43, Ser44, Gly45, Lys46, Ser47, Thr48, Asp150, Ser151, Leu175, Arg176, Thr177, Arg178, Val179, Lys180, Thr181, Val201, Gly203, Asn269, Lys270, Asp272, Leu273, Cys325, Ala326, and Thr327. Ser47 lines the Mg(2+) pocket. A G2 motif region spans residues 173-181 (DVLRTRVKT). Residue Thr181 coordinates Mg(2+). Positions 196-205 (FKMFDVGGQR) are G3 motif. The interval 265–272 (ILFLNKKD) is G4 motif. Residues 324–329 (TCATDT) are G5 motif.

The protein belongs to the G-alpha family. G(i/o/t/z) subfamily. Heterotrimeric G proteins are composed of 3 units; alpha, beta and gamma. The alpha subunit contains the guanine nucleotide binding site. GTP binding causes dissociation of the heterotrimer, liberating the individual subunits so that they can interact with downstream effector proteins. Forms a complex with CCDC88A/GIV and EGFR which leads to enhanced EGFR signaling and triggering of cell migration; ligand stimulation is required for recruitment of GNAI3 to the complex. Interacts (inactive GDP-bound form) with CCDC88A/GIV (via GBA motif); the interaction leads to activation of GNAI3. Interacts (inactive GDP-bound form) with CCDC88C/DAPLE (via GBA motif); the interaction leads to activation of GNAI3. Interacts (inactive GDP-bound form) with NUCB1 (via GBA motif) and NUCB2 (via GBA motif); the interaction leads to activation of GNAI3. Interacts (inactive GDP-bound form) with PLCD4 (via GBA motif); the interaction leads to activation of GNAI3. Interacts with INSR; the interaction is probably mediated by CCDC88A/GIV. Interacts with GPSM1. Interacts (GDP-bound form) with GPSM2 (via GoLoco domains). Does not interact with RGS2. Interacts with RGS8 and RGS10; this strongly enhances the intrinsic GTPase activity. Interacts with RGS12. Interacts with RGS16; this strongly enhances the intrinsic GTPase activity. Interacts (via active GTP- or inactive GDP-bound form) with RGS14. Interacts (via active GTP-bound form) with TRPC5 (via ANK repeats) in a homotetrameric ion channel; the interaction is direct and activates the channel activity. In terms of tissue distribution, ubiquitous.

The protein resides in the cytoplasm. It is found in the cell membrane. Its subcellular location is the cytoskeleton. The protein localises to the microtubule organizing center. It localises to the centrosome. Its function is as follows. Heterotrimeric guanine nucleotide-binding proteins (G proteins) function as transducers downstream of G protein-coupled receptors (GPCRs) in numerous signaling cascades. The alpha chain contains the guanine nucleotide binding site and alternates between an active, GTP-bound state and an inactive, GDP-bound state. Signaling by an activated GPCR promotes GDP release and GTP binding. The alpha subunit has a low GTPase activity that converts bound GTP to GDP, thereby terminating the signal. Both GDP release and GTP hydrolysis are modulated by numerous regulatory proteins. Signaling is mediated via effector proteins, such as adenylate cyclase. Inhibits adenylate cyclase activity, leading to decreased intracellular cAMP levels. Stimulates the activity of receptor-regulated K(+) channels. The active GTP-bound form prevents the association of RGS14 with centrosomes and is required for the translocation of RGS14 from the cytoplasm to the plasma membrane. May play a role in cell division. The active GTP-bound form activates the calcium permeant TRPC5 ion channels. In Rattus norvegicus (Rat), this protein is Guanine nucleotide-binding protein G(i) subunit alpha-3 (Gnai3).